The following is a 247-amino-acid chain: Probable transcriptional regulatory protein Gbem_3313 (247 aa).

This sequence belongs to the TACO1 family.

Its subcellular location is the cytoplasm. This Citrifermentans bemidjiense (strain ATCC BAA-1014 / DSM 16622 / JCM 12645 / Bem) (Geobacter bemidjiensis) protein is Probable transcriptional regulatory protein Gbem_3313.